The following is a 331-amino-acid chain: D-alanine--D-alanine ligase (331 aa).

An ATP-grasp domain is found at 112–314; it reads KRIWRSEGLP…YEDLCLRLLA (203 aa). 138 to 193 serves as a coordination point for ATP; the sequence is LQTLGAPMIVKPAREGSTIGLSKVHQAQQCASAYLLAARYDPEVLCEQFIAGDELT. The Mg(2+) site is built by Asp267, Glu281, and Asn283.

It belongs to the D-alanine--D-alanine ligase family. Mg(2+) is required as a cofactor. It depends on Mn(2+) as a cofactor.

The protein localises to the cytoplasm. It catalyses the reaction 2 D-alanine + ATP = D-alanyl-D-alanine + ADP + phosphate + H(+). The protein operates within cell wall biogenesis; peptidoglycan biosynthesis. Cell wall formation. The chain is D-alanine--D-alanine ligase from Verminephrobacter eiseniae (strain EF01-2).